Here is a 207-residue protein sequence, read N- to C-terminus: Large ribosomal subunit protein uL4 (207 aa).

The segment at 48–86 (THKVKNRSEVRGGGRKPWRQKGTGRARQGSIRSPQWRGG) is disordered. Positions 60–71 (GGRKPWRQKGTG) are enriched in basic residues.

It belongs to the universal ribosomal protein uL4 family. In terms of assembly, part of the 50S ribosomal subunit.

One of the primary rRNA binding proteins, this protein initially binds near the 5'-end of the 23S rRNA. It is important during the early stages of 50S assembly. It makes multiple contacts with different domains of the 23S rRNA in the assembled 50S subunit and ribosome. In terms of biological role, forms part of the polypeptide exit tunnel. The protein is Large ribosomal subunit protein uL4 of Bacillus licheniformis (strain ATCC 14580 / DSM 13 / JCM 2505 / CCUG 7422 / NBRC 12200 / NCIMB 9375 / NCTC 10341 / NRRL NRS-1264 / Gibson 46).